We begin with the raw amino-acid sequence, 432 residues long: Pachytene checkpoint protein 2 homolog (432 aa).

N-acetylmethionine is present on Met-1. 179-186 (GPPGTGKT) is an ATP binding site.

This sequence belongs to the AAA ATPase family. PCH2 subfamily. In terms of assembly, specifically interacts with the ligand binding domain of the thyroid receptor (TR). This interaction does not require the presence of thyroid hormone for its interaction. Interacts with proteasome subunit PSMA8; to participate in meiosis progression during spermatogenesis.

In terms of biological role, plays a key role in chromosome recombination and chromosome structure development during meiosis. Required at early steps in meiotic recombination that leads to non-crossovers pathways. Also needed for efficient completion of homologous synapsis by influencing crossover distribution along the chromosomes affecting both crossovers and non-crossovers pathways. Also required for development of higher-order chromosome structures and is needed for synaptonemal-complex formation. In males, required for efficient synapsis of the sex chromosomes and for sex body formation. Promotes early steps of the DNA double-strand breaks (DSBs) repair process upstream of the assembly of RAD51 complexes. Required for depletion of HORMAD1 and HORMAD2 from synapsed chromosomes. Plays a role in mitotic spindle assembly checkpoint (SAC) activation. This chain is Pachytene checkpoint protein 2 homolog (Trip13), found in Rattus norvegicus (Rat).